The following is a 943-amino-acid chain: MTQDYKATLHLPATDFPMRGDLPKREPAMLERWEREGLYAQVRANAAGRPLFVLHDGPPYANGQIHLGHAVNKILKDIIVKSKYLAGFDAPYIPGWDCHGLPIEIAIEKKFGKVGVKLDAAQFRQKCREYATEQIDLQRRDFKRLGVIGDWDNPYKTLDFRFEANEIRALAKVIDNGHLTRGVKPVHWCFDCGSALAEAEIEYADKLSPTVDIAYPARDPAAIAAAFGVTLPAGTQVAVPIWTTTPWTLPASLAVSLGAELDYVLVEGPADRGQPRWLVIAEALAGKALARYGVEAVVVHGHAKGAALDQLLLAHPFYAERDIPLILGDHVSDDDGTGAVHTAPGHGQEDYQVSKQYGLLERYSAAQINPIDGRGVYLPSTPPLGDTVLAGLHIWKANDVIIDALRDTGVLLAASTMEHSYPHCWRHKTPIAFRATPQWFISMEQANLRADALKAIETVHWYPSWGQARIAGMIDGRPDWTISRQRTWGVPIALFVHRETGEPHPRSTELMRQVAERVEQGGVDVWYTLDAAELLGDEAGDYDKITDILDVWFDSGVTHEAVLVDRGLPKPADLYLEGSDQHRGWFQSSLLTGVAMDKVAPYKQCLTHGFTVDEHGRKMSKSLGNGIEPQEIMRTLGADILRLWIASADYSNEMSLSQEILKRNADAYRRLRNTARFLLGNLHGFDPLQHLVALDDMVLLDRWIVHRAHELQEKITAAYARYDFAEIVQALLNFCSVDLGSLYLDVTKDRLYTMAEDARGRRSAQSAMYHVAEAFVRWIAPVLSFTAEELWAYLPGEHSGNVLFATWYDGLAPMPADAALTSADVDKLLALREQVAKVLEPMRANGAIGAALEAEITVAADAQTAARWQPLSDELRFLFISGDVTVTAASTDDIFVSAQPTTKAKCVRCWHHQASVGSDPRHPELCSRCVSNIEGPGEERRWF.

A 'HIGH' region motif is present at residues 59–69; sequence PYANGQIHLGH. Glu-577 contributes to the L-isoleucyl-5'-AMP binding site. The 'KMSKS' region motif lies at 618–622; the sequence is KMSKS. Residue Lys-621 participates in ATP binding. 4 residues coordinate Zn(2+): Cys-906, Cys-909, Cys-926, and Cys-929.

This sequence belongs to the class-I aminoacyl-tRNA synthetase family. IleS type 1 subfamily. In terms of assembly, monomer. It depends on Zn(2+) as a cofactor.

It is found in the cytoplasm. The enzyme catalyses tRNA(Ile) + L-isoleucine + ATP = L-isoleucyl-tRNA(Ile) + AMP + diphosphate. Functionally, catalyzes the attachment of isoleucine to tRNA(Ile). As IleRS can inadvertently accommodate and process structurally similar amino acids such as valine, to avoid such errors it has two additional distinct tRNA(Ile)-dependent editing activities. One activity is designated as 'pretransfer' editing and involves the hydrolysis of activated Val-AMP. The other activity is designated 'posttransfer' editing and involves deacylation of mischarged Val-tRNA(Ile). The polypeptide is Isoleucine--tRNA ligase (Xanthomonas campestris pv. campestris (strain 8004)).